Reading from the N-terminus, the 287-residue chain is Lipoyl synthase (287 aa).

Residues Cys34, Cys39, Cys45, Cys60, Cys64, Cys67, and Ser273 each contribute to the [4Fe-4S] cluster site. In terms of domain architecture, Radical SAM core spans 46 to 262 (WNKRHATVMI…KYIAYSKGFL (217 aa)).

Belongs to the radical SAM superfamily. Lipoyl synthase family. Requires [4Fe-4S] cluster as cofactor.

It localises to the cytoplasm. It carries out the reaction [[Fe-S] cluster scaffold protein carrying a second [4Fe-4S](2+) cluster] + N(6)-octanoyl-L-lysyl-[protein] + 2 oxidized [2Fe-2S]-[ferredoxin] + 2 S-adenosyl-L-methionine + 4 H(+) = [[Fe-S] cluster scaffold protein] + N(6)-[(R)-dihydrolipoyl]-L-lysyl-[protein] + 4 Fe(3+) + 2 hydrogen sulfide + 2 5'-deoxyadenosine + 2 L-methionine + 2 reduced [2Fe-2S]-[ferredoxin]. It participates in protein modification; protein lipoylation via endogenous pathway; protein N(6)-(lipoyl)lysine from octanoyl-[acyl-carrier-protein]: step 2/2. Its function is as follows. Catalyzes the radical-mediated insertion of two sulfur atoms into the C-6 and C-8 positions of the octanoyl moiety bound to the lipoyl domains of lipoate-dependent enzymes, thereby converting the octanoylated domains into lipoylated derivatives. The protein is Lipoyl synthase of Wolbachia sp. subsp. Drosophila simulans (strain wRi).